The following is a 1004-amino-acid chain: 2-oxoglutarate dehydrogenase E1 component (1004 aa).

The protein belongs to the alpha-ketoglutarate dehydrogenase family. As to quaternary structure, homodimer. Part of the 2-oxoglutarate dehydrogenase (OGDH) complex composed of E1 (2-oxoglutarate dehydrogenase), E2 (dihydrolipoamide succinyltransferase) and E3 (dihydrolipoamide dehydrogenase); the complex contains multiple copies of the three enzymatic components (E1, E2 and E3). It depends on thiamine diphosphate as a cofactor.

It carries out the reaction N(6)-[(R)-lipoyl]-L-lysyl-[protein] + 2-oxoglutarate + H(+) = N(6)-[(R)-S(8)-succinyldihydrolipoyl]-L-lysyl-[protein] + CO2. In terms of biological role, E1 component of the 2-oxoglutarate dehydrogenase (OGDH) complex which catalyzes the decarboxylation of 2-oxoglutarate, the first step in the conversion of 2-oxoglutarate to succinyl-CoA and CO(2). In Brucella suis biovar 1 (strain 1330), this protein is 2-oxoglutarate dehydrogenase E1 component.